We begin with the raw amino-acid sequence, 51 residues long: Ribosome biogenesis protein Nop10 (51 aa).

It belongs to the NOP10 family.

Involved in ribosome biogenesis; more specifically in 18S rRNA pseudouridylation and in cleavage of pre-rRNA. This Methanosarcina barkeri (strain Fusaro / DSM 804) protein is Ribosome biogenesis protein Nop10.